A 243-amino-acid polypeptide reads, in one-letter code: Anti-sigma-K factor RskA (243 aa).

Residues 1–102 (MTEPNNTDLL…RGGESRWRTA (102 aa)) are Cytoplasmic-facing. A helical transmembrane segment spans residues 103-123 (VLAAAAVAVVGLGALGVGLAL). Over 124-243 (RPAVSPTTAD…SPAFAELPLT (120 aa)) the chain is Extracellular. The tract at residues 223-243 (VEPPGGSQRPTSPAFAELPLT) is disordered.

This sequence belongs to the anti-sigma-K factor family.

It is found in the cell membrane. Its function is as follows. An anti-sigma factor for extracytoplasmic function (ECF) sigma factor SigK. ECF sigma factors are held in an inactive form by an anti-sigma factor until released by regulated intramembrane proteolysis (RIP). RIP occurs when an extracytoplasmic signal triggers a concerted proteolytic cascade to transmit information and elicit cellular responses. The membrane-spanning regulatory substrate protein is first cut extracytoplasmically (site-1 protease, S1P), then within the membrane itself (site-2 protease, S2P, Rip1), while cytoplasmic proteases finish degrading the regulatory protein, liberating the sigma factor. The protein is Anti-sigma-K factor RskA (rskA) of Mycobacterium sp. (strain JLS).